A 92-amino-acid polypeptide reads, in one-letter code: FMRFamide-like neuropeptides 16 (92 aa).

Positions 1-24 (MNFSGFEFSSIVAFFLLILQLSTA) are cleaved as a signal peptide. A propeptide spanning residues 25 to 55 (AVLPADYAYGVADEMSALPDSGSLFAEQRPS) is cleaved from the precursor. Phenylalanine 64, phenylalanine 74, and phenylalanine 84 each carry phenylalanine amide. Residues 87-92 (SAPFEQ) constitute a propeptide that is removed on maturation.

This sequence belongs to the FARP (FMRFamide related peptide) family. Each flp gene is expressed in a distinct set of neurons.

It localises to the secreted. Its function is as follows. FMRFamides and FMRFamide-like peptides are neuropeptides. AQTFVRF-amide inhibits the activity of dissected pharyngeal myogenic muscle system. This is FMRFamide-like neuropeptides 16 from Caenorhabditis elegans.